The following is a 176-amino-acid chain: tRNA (cytidine(56)-2'-O)-methyltransferase (176 aa).

S-adenosyl-L-methionine is bound by residues Leu86 and Gly111 to Val115.

The protein belongs to the aTrm56 family. In terms of assembly, homodimer.

It localises to the cytoplasm. The catalysed reaction is cytidine(56) in tRNA + S-adenosyl-L-methionine = 2'-O-methylcytidine(56) in tRNA + S-adenosyl-L-homocysteine + H(+). Its function is as follows. Specifically catalyzes the AdoMet-dependent 2'-O-ribose methylation of cytidine at position 56 in tRNAs. The protein is tRNA (cytidine(56)-2'-O)-methyltransferase of Methanoregula boonei (strain DSM 21154 / JCM 14090 / 6A8).